The sequence spans 144 residues: Large ribosomal subunit protein uL13 (144 aa).

It belongs to the universal ribosomal protein uL13 family. In terms of assembly, part of the 50S ribosomal subunit.

Its function is as follows. This protein is one of the early assembly proteins of the 50S ribosomal subunit, although it is not seen to bind rRNA by itself. It is important during the early stages of 50S assembly. The chain is Large ribosomal subunit protein uL13 from Mycoplasmopsis agalactiae (strain NCTC 10123 / CIP 59.7 / PG2) (Mycoplasma agalactiae).